The chain runs to 494 residues: UDP-N-acetylmuramoyl-L-alanyl-D-glutamate--L-lysine ligase (494 aa).

UDP-N-acetyl-alpha-D-muramoyl-L-alanyl-D-glutamate is bound at residue Ser30. 110–116 (GTNGKTS) contributes to the ATP binding site. UDP-N-acetyl-alpha-D-muramoyl-L-alanyl-D-glutamate is bound by residues 152 to 153 (TT), Ser179, and Arg187. Position 219 is an N6-carboxylysine (Lys219). The L-lysine recognition motif signature appears at 406–409 (DNPA).

The protein belongs to the MurCDEF family. MurE subfamily. Carboxylation is probably crucial for Mg(2+) binding and, consequently, for the gamma-phosphate positioning of ATP.

It is found in the cytoplasm. The catalysed reaction is UDP-N-acetyl-alpha-D-muramoyl-L-alanyl-D-glutamate + L-lysine + ATP = UDP-N-acetyl-alpha-D-muramoyl-L-alanyl-gamma-D-glutamyl-L-lysine + ADP + phosphate + H(+). It functions in the pathway cell wall biogenesis; peptidoglycan biosynthesis. Functionally, catalyzes the addition of L-lysine to the nucleotide precursor UDP-N-acetylmuramoyl-L-alanyl-D-glutamate (UMAG) in the biosynthesis of bacterial cell-wall peptidoglycan. In Staphylococcus aureus (strain Mu3 / ATCC 700698), this protein is UDP-N-acetylmuramoyl-L-alanyl-D-glutamate--L-lysine ligase.